Here is a 713-residue protein sequence, read N- to C-terminus: Phenylalanine--tRNA ligase beta subunit (713 aa).

The region spanning 39-153 is the tRNA-binding domain; it reads IRHVENIKYG…EANLNEDPIA (115 aa). The B5 domain maps to 379 to 454; sequence LKPKEILFDH…RFYGYDNFPI (76 aa). Residues Asp-432, Asp-438, Glu-441, and Glu-442 each contribute to the Mg(2+) site.

Belongs to the phenylalanyl-tRNA synthetase beta subunit family. Type 1 subfamily. As to quaternary structure, tetramer of two alpha and two beta subunits. Mg(2+) serves as cofactor.

The protein resides in the cytoplasm. It carries out the reaction tRNA(Phe) + L-phenylalanine + ATP = L-phenylalanyl-tRNA(Phe) + AMP + diphosphate + H(+). The protein is Phenylalanine--tRNA ligase beta subunit of Mycoplasma mobile (strain ATCC 43663 / 163K / NCTC 11711) (Mesomycoplasma mobile).